Consider the following 1087-residue polypeptide: Apoptosis-stimulating of p53 protein 1 (1087 aa).

Residues 82 to 122 form a disordered region; that stretch reads HEDSPTESSEQGARQTQEQRTQRSVVNVPGEKRTENGVGNP. Positions 87-106 are enriched in polar residues; it reads TESSEQGARQTQEQRTQRSV. Residues S332 and S335 each carry the phosphoserine modification. Disordered regions lie at residues 374–415, 442–721, and 734–878; these read SSAA…GMEG, IGKG…PNIQ, and GMEG…TGHG. Over residues 393–405 the composition is skewed to polar residues; the sequence is KQNSASVKSTQMT. Residues 445-458 show a composition bias toward pro residues; it reads GPPPIPGVGKPLPP. Residues 459–476 are compositionally biased toward low complexity; it reads SYGTYPSSGPLGPGSTSS. Polar residues predominate over residues 506 to 520; it reads NAPQPGSSQQIQQRI. Residues 523–536 are compositionally biased toward pro residues; that stretch reads PPSPTYPPAGPPAF. R552 carries the post-translational modification Asymmetric dimethylarginine. A compositionally biased stretch (polar residues) spans 570-589; sequence QTVNSSSIYSMYLQQATPPK. Residues 610 to 625 are compositionally biased toward low complexity; that stretch reads PVLPSGSASPSPLPFL. A phosphoserine mark is found at S679 and S708. Over residues 805-831 the composition is skewed to polar residues; the sequence is PQTTHQTAEPTEDNNNNVAPVPSTEQI. 2 ANK repeats span residues 917–949 and 950–982; these read EGIT…AADS and DGWT…ASTI. The region spanning 1016–1078 is the SH3 domain; sequence MNKGTVYALW…PKNLLGLYPR (63 aa).

It belongs to the ASPP family. In terms of assembly, interacts with P53/TP53; the interaction promotes pro-apoptotic activity.

It localises to the cytoplasm. Its subcellular location is the nucleus. Its function is as follows. Regulator that plays a central role in regulation of apoptosis via its interaction with p53/TP53. Regulates TP53 by enhancing the DNA binding and transactivation function of TP53 on the promoters of proapoptotic genes in vivo. The protein is Apoptosis-stimulating of p53 protein 1 (Ppp1r13b) of Mus musculus (Mouse).